A 583-amino-acid chain; its full sequence is Radixin (583 aa).

One can recognise an FERM domain in the interval Ile5–Arg295. Lys60–Lys63 is an a 1,2-diacyl-sn-glycero-3-phospho-(1D-myo-inositol) binding site. N6-succinyllysine is present on Lys83. Lys278 contributes to the a 1,2-diacyl-sn-glycero-3-phospho-(1D-myo-inositol) binding site. Disordered regions lie at residues Arg310–Arg330, Asp376–Ala407, and Glu462–Lys526. The span at Asp376–Lys400 shows a compositional bias: basic and acidic residues. Residues Ala469 to Pro480 are compositionally biased toward pro residues. Composition is skewed to basic and acidic residues over residues Glu483–Asn492 and Met506–Lys525. Phosphothreonine; by ROCK2 is present on Thr564.

Binds NHERF1. Interacts with NHERF1, NHERF2, LAYN, MME/NEP and ICAM2. Interacts with CPNE1 (via VWFA domain) and CPNE4 (via VWFA domain). Interacts (via FERM domain) with SPN/CD43 cytoplasmic tail. Interacts with CD44. Interacts with CLIC5; may work together in a complex which also includes EZR and MYO6 to stabilize linkages between the plasma membrane and subjacent actin cytoskeleton at the base of stereocilia. Phosphorylated by tyrosine-protein kinases. Phosphorylation by ROCK2 suppresses the head-to-tail association of the N-terminal and C-terminal halves resulting in an opened conformation which is capable of actin and membrane-binding.

It localises to the cell membrane. The protein localises to the cytoplasm. The protein resides in the cytoskeleton. Its subcellular location is the cleavage furrow. It is found in the cell projection. It localises to the microvillus. The protein localises to the stereocilium. With respect to regulation, a head-to-tail association, of the N-terminal and C-terminal halves results in a closed conformation (inactive form) which is incapable of actin or membrane-binding. Functionally, probably plays a crucial role in the binding of the barbed end of actin filaments to the plasma membrane. This chain is Radixin (RDX), found in Homo sapiens (Human).